The sequence spans 555 residues: Wee1-like protein kinase 2-A (555 aa).

Disordered stretches follow at residues 1–81 (MRTA…SVGA) and 149–175 (FTPE…DCRT). Over residues 38–48 (SPVSSWRTNNC) the composition is skewed to polar residues. Positions 68-78 (SPSSDYSPDPS) are enriched in low complexity. The segment covering 149 to 160 (FTPESYRQTHFQ) has biased composition (polar residues). A Protein kinase domain is found at 210 to 480 (FLEIEKIGAG…AASLAKNSVL (271 aa)). Residues 216–224 (IGAGEFGSV) and lysine 239 each bind ATP. Catalysis depends on aspartate 337, which acts as the Proton acceptor. 2 residues coordinate Mg(2+): asparagine 342 and aspartate 374. Residues 487-513 (AAQLQKQLNVEKFKTAMLERELKAAKL) are a coiled coil. Position 549 is a phosphoserine (serine 549).

The protein belongs to the protein kinase superfamily. Ser/Thr protein kinase family. WEE1 subfamily. As to quaternary structure, interacts with prmt5; this promotes protesomal degradation of wee2-a in the nucleus. The interaction with prmt5 is disrupted upon activation of the DNA replication checkpoint. In terms of processing, subject to proteasomal degradation in the nucleus. Detected in egg (at protein level). Oocyte-specific maternally supplied protein. Present in immature and mature oocytes and in early (pregastrula) embryos, but not in post-gastrula embryos.

It localises to the nucleus. It is found in the cytoplasm. The protein localises to the cytosol. It catalyses the reaction L-tyrosyl-[protein] + ATP = O-phospho-L-tyrosyl-[protein] + ADP + H(+). Functionally, oocyte-specific protein tyrosine kinase that phosphorylates and inhibits cdk1 and acts as a key regulator of meiosis. Required to maintain meiotic arrest in oocytes by phosphorylating cdk1 at 'Tyr-15', which inhibits cdk1 activity and prevents meiotic reentry. Negative regulator of mitosis. Involved in the mitotic DNA replication checkpoint. This chain is Wee1-like protein kinase 2-A (wee2-a), found in Xenopus laevis (African clawed frog).